A 214-amino-acid polypeptide reads, in one-letter code: Octanoyltransferase (214 aa).

The 179-residue stretch at 36–214 (GRESEMVWLL…QQKFDTIFLQ (179 aa)) folds into the BPL/LPL catalytic domain. Substrate is bound by residues 75 to 82 (RGGKYSYH), 147 to 149 (AFG), and 160 to 162 (GFS). Residue C178 is the Acyl-thioester intermediate of the active site.

Belongs to the LipB family.

It localises to the cytoplasm. It catalyses the reaction octanoyl-[ACP] + L-lysyl-[protein] = N(6)-octanoyl-L-lysyl-[protein] + holo-[ACP] + H(+). It participates in protein modification; protein lipoylation via endogenous pathway; protein N(6)-(lipoyl)lysine from octanoyl-[acyl-carrier-protein]: step 1/2. Functionally, catalyzes the transfer of endogenously produced octanoic acid from octanoyl-acyl-carrier-protein onto the lipoyl domains of lipoate-dependent enzymes. Lipoyl-ACP can also act as a substrate although octanoyl-ACP is likely to be the physiological substrate. The polypeptide is Octanoyltransferase (Anaplasma marginale (strain Florida)).